Here is a 556-residue protein sequence, read N- to C-terminus: Oxygen-dependent choline dehydrogenase (556 aa).

6-35 lines the FAD pocket; the sequence is DYIIIGAGSAGNVLAARLTEDPGVTVLLLE. H475 functions as the Proton acceptor in the catalytic mechanism.

It belongs to the GMC oxidoreductase family. Requires FAD as cofactor.

The catalysed reaction is choline + A = betaine aldehyde + AH2. It carries out the reaction betaine aldehyde + NAD(+) + H2O = glycine betaine + NADH + 2 H(+). It functions in the pathway amine and polyamine biosynthesis; betaine biosynthesis via choline pathway; betaine aldehyde from choline (cytochrome c reductase route): step 1/1. In terms of biological role, involved in the biosynthesis of the osmoprotectant glycine betaine. Catalyzes the oxidation of choline to betaine aldehyde and betaine aldehyde to glycine betaine at the same rate. This is Oxygen-dependent choline dehydrogenase from Xanthomonas euvesicatoria pv. vesicatoria (strain 85-10) (Xanthomonas campestris pv. vesicatoria).